The sequence spans 101 residues: Small ribosomal subunit protein uS14 (101 aa).

This sequence belongs to the universal ribosomal protein uS14 family. Part of the 30S ribosomal subunit. Contacts proteins S3 and S10.

In terms of biological role, binds 16S rRNA, required for the assembly of 30S particles and may also be responsible for determining the conformation of the 16S rRNA at the A site. The protein is Small ribosomal subunit protein uS14 of Rhizobium etli (strain CIAT 652).